Reading from the N-terminus, the 91-residue chain is LYR motif-containing protein 4 (91 aa).

The pantetheine 4'-phosphate site is built by Arg-6 and Lys-44. Lys-47 bears the N6-succinyllysine mark.

This sequence belongs to the complex I LYR family. In terms of assembly, homodimer. Component of the mitochondrial core iron-sulfur cluster (ISC) complex composed of NFS1, LYRM4, NDUFAB1, ISCU, FXN, and FDX2; this complex is a heterohexamer containing two copies of each monomer. Component of the cyteine desulfurase complex composed of NFS1, LYRM4 and NDUFAB1; this complex contributes to the stability and cysteine desulfurase activity of NFS1. Interacts with FXN; this interaction is nickel-dependent. Interacts with the cytoplasmic form of NFS1; the complex increases the stability of NFS1. Forms a complex with the cytoplasmic form of NFS1; this complex increases the stability and cysteine desulfurase activity of NFS1. Interacts with NFS1. Component of a complex composed of FXN, NFS1, LYRM4 and ISCU.

Its subcellular location is the mitochondrion. It is found in the nucleus. The protein operates within cofactor biosynthesis; iron-sulfur cluster biosynthesis. In terms of biological role, stabilizing factor, of the core iron-sulfur cluster (ISC) assembly complex, that regulates, in association with NDUFAB1, the stability and the cysteine desulfurase activity of NFS1 and participates in the [2Fe-2S] clusters assembly on the scaffolding protein ISCU. The core iron-sulfur cluster (ISC) assembly complex is involved in the de novo synthesis of a [2Fe-2S] cluster, the first step of the mitochondrial iron-sulfur protein biogenesis. This process is initiated by the cysteine desulfurase complex (NFS1:LYRM4:NDUFAB1) that produces persulfide which is delivered on the scaffold protein ISCU in a FXN-dependent manner. Then this complex is stabilized by FDX2 which provides reducing equivalents to accomplish the [2Fe-2S] cluster assembly. Finally, the [2Fe-2S] cluster is transferred from ISCU to chaperone proteins, including HSCB, HSPA9 and GLRX5. May also participates in the iron-sulfur protein biogenesis in the cytoplasm through its interaction with the cytoplasmic form of NFS1. In Mus musculus (Mouse), this protein is LYR motif-containing protein 4.